We begin with the raw amino-acid sequence, 332 residues long: Glycine betaine-binding periplasmic protein OusX (332 aa).

A signal peptide spans 1–21 (MRNISMATLALTTVLSTGLFA).

The complex is composed of two ATP-binding proteins (OusV), two transmembrane proteins (OusW) and a solute-binding protein (OusX).

The protein localises to the periplasm. In terms of biological role, part of the OusB ABC transporter complex involved in glycine betaine and choline uptake. Binds glycine betaine. The polypeptide is Glycine betaine-binding periplasmic protein OusX (Dickeya dadantii (strain 3937) (Erwinia chrysanthemi (strain 3937))).